Consider the following 245-residue polypeptide: uncharacterized protein (245 aa).

One can recognise an HTH gntR-type domain in the interval 29-96 (RSLIEATFQR…AQRGFHVTPM (68 aa)). Positions 56–75 (IEDLKSRYEVSGGTVREALS) form a DNA-binding region, H-T-H motif.

This is an uncharacterized protein from Paraburkholderia xenovorans (strain LB400).